An 85-amino-acid chain; its full sequence is Large ribosomal subunit protein bL31B (85 aa).

This sequence belongs to the bacterial ribosomal protein bL31 family. Type B subfamily. In terms of assembly, part of the 50S ribosomal subunit.

This chain is Large ribosomal subunit protein bL31B, found in Aliivibrio salmonicida (strain LFI1238) (Vibrio salmonicida (strain LFI1238)).